The sequence spans 151 residues: Calcium-binding protein SPEC 2C (151 aa).

EF-hand domains follow at residues 10–45 (EQRK…IEIE), 46–78 (LTQE…KAEQ), 81–116 (GKGA…CTDP), and 118–151 (MTKE…QSSY). Residues Asp-23, Asp-25, Asp-27, Lys-29, Glu-34, Asp-59, Asp-61, Ser-63, Glu-70, Asp-94, Asp-96, Ser-98, Ser-100, Glu-105, Asp-131, Asp-135, Glu-137, and Glu-142 each contribute to the Ca(2+) site.

Found in cell lineages giving rise to the aboral ectoderm, a squamous epithelium covering the surface of the late stage embryo and larva.

Functionally, calcium-binding protein involved in larval development and metamorphosis. Likely to function as calcium buffers mediating the transport of calcium from the sea water to the blastocoel where calcium is required for skeleton formation. In Strongylocentrotus purpuratus (Purple sea urchin), this protein is Calcium-binding protein SPEC 2C (SPEC2C).